A 6486-amino-acid chain; its full sequence is Tyrocidine synthase 3 (6486 aa).

Residues 466 to 1038 are domain 1 (asparagine-activating); the sequence is IFELIAEQAS…VAELARFLSR (573 aa). 6 Carrier domains span residues 965-1040, 2002-2077, 3040-3115, 4075-4150, 5119-5194, and 6162-6237; these read APQN…SRSE, APRN…AAAR, APTN…ATSG, AAQN…AESA, APRS…EETA, and APRN…THKR. Residues serine 1000, serine 2037, serine 3075, serine 4110, serine 5154, and serine 6197 each carry the O-(pantetheine 4'-phosphoryl)serine modification. The domain 2 (glutamine-activating) stretch occupies residues 1521-2070; that stretch reads YEEYALTYRE…FESPTIAGLA (550 aa). A domain 3 (tyrosine-activating) region spans residues 2536 to 3113; sequence NKTLQALFEE…IKALAQYVAT (578 aa). Positions 3590–4149 are domain 4 (valine-activating); it reads EHAAVVMDGQ…HELAAHIAES (560 aa). The tract at residues 4606–5203 is domain 5 (ornithine-activating); that stretch reads YPTDKTFQKL…AKGNVFSIEP (598 aa). The interval 5658 to 6245 is domain 6 (leucine-activating); that stretch reads LHQLFEEQVD…KRFESRYGTA (588 aa).

Belongs to the ATP-dependent AMP-binding enzyme family. In terms of assembly, large multienzyme complex of TycA, TycB and TycC. Pantetheine 4'-phosphate is required as a cofactor.

It functions in the pathway antibiotic biosynthesis; tyrocidine biosynthesis. Its function is as follows. Incorporates six amino acids (for tyrocidine A, Asn, Gln, Tyr, Val, Orn, and Leu) in their L-configuration into the peptide product. The sequence is that of Tyrocidine synthase 3 (tycC) from Brevibacillus parabrevis.